We begin with the raw amino-acid sequence, 941 residues long: MDRSSKRRQVKPLAASLLEALDYDSSDDSDFKVGDASDSEGSGNGSEDPSKDSGEGSCSDSEENILEEELNEDIQVKEEQLKNSTEEIMPSDKQLIKMEKKEEEENGERPRKKKEKEKEKEKEREKDKEKATVSDSAAASAAGTTPATSPPAVTSPSVPTTTTTTTEEQVSEPKKWNLRRNRPLLDFVSMEELNAMDDYDSEDDNDWRPTVVKRKGRSASQKEGSDGDNEDDDDEGSGSEEDENDEGNDEDHSSPASEAGGKKKRSKVLSRNSADDEELTNDSLTLSQSKSNEDSLILEKSQNWSSQKMDHILICCVCLGDNSEDADEIIQCDNCGITVHEGCYGVDGESDSIMSSASENSTEPWFCDACKCGVSPSCELCPNQDGIFKETDAGRWVHIVCALYVPGVAFGDIDKLRPVTLTEMNYSKYGAKECSFCEDPRFARTGVCISCDAGMCRAYFHVTCAQKEGLLSEAAAEEDIADPFFAYCKQHADRLDRKWKRKNYLALQSYCKMSLQEREKQLSPEAQARINARLQQYRAKAELARSTRPQAWVPREKLPRPLTSSASAIRKLMRKAELMGISTDIFPVDNSDTSSSVDGRRKHKQPALTADFVNYYFERNMRMIQIQENMAEQKNIKDKLENEQEKLHVEYNKLCESLEELQNLNGKLRSEGQGIWALLGRITGQKLNVPAILRAPKERKPSKKEGGTQKTSALPTVLYSCGICKKNHDQHLLLLCDTCKLHYHLGCLDPPLTRMPRKTKNSYWQCSECDQAGSSDMEAEMAMETLPDGTKRSRRQIKEPVKFVPQDVPPEPKKIPIRNTRTRGRKRSFVPEEEKHEERVPRERRQRQSVLQKKPKAEDLRTECSTCKGTGDNENLVRCDECRLCYHFGCLDPPLKKSPKQTGYGWICQECDSSSSKEDENEAEKKNASQELSMEQKTPKK.

Positions 22–295 (DYDSSDDSDF…LSQSKSNEDS (274 aa)) are disordered. A phosphoserine mark is found at serine 26 and serine 29. The segment covering 36-47 (ASDSEGSGNGSE) has biased composition (low complexity). Over residues 60–72 (DSEENILEEELNE) the composition is skewed to acidic residues. Basic and acidic residues-rich tracts occupy residues 74–85 (IQVKEEQLKNST), 94–109 (QLIKMEKKEEEENGER), and 116–132 (KEKEKEKEREKDKEKAT). Phosphoserine is present on serine 84. Positions 133-166 (VSDSAAASAAGTTPATSPPAVTSPSVPTTTTTTT) are enriched in low complexity. At serine 189 the chain carries Phosphoserine. Composition is skewed to acidic residues over residues 194–205 (NAMDDYDSEDDN) and 226–249 (DGDNEDDDDEGSGSEEDENDEGND). Tyrosine 199 carries the phosphotyrosine modification. Phosphoserine is present on serine 201. Threonine 280 is subject to Phosphothreonine. Residues 281–290 (NDSLTLSQSK) show a composition bias toward polar residues. Phosphoserine occurs at positions 283, 287, 291, 295, and 301. A PHD-type 1 zinc finger spans residues 312–373 (ILICCVCLGD…PWFCDACKCG (62 aa)). Residues cysteine 315, cysteine 318, cysteine 332, cysteine 335, histidine 340, and cysteine 343 each coordinate Zn(2+). At serine 352 the chain carries Phosphoserine. Residues cysteine 367, cysteine 370, cysteine 378, cysteine 381, histidine 398, cysteine 401, cysteine 434, cysteine 437, cysteine 451, cysteine 456, histidine 461, cysteine 464, cysteine 488, and histidine 491 each contribute to the Zn(2+) site. The C2HC pre-PHD-type zinc finger occupies 375-408 (SPSCELCPNQDGIFKETDAGRWVHIVCALYVPGV). The PHD-type 2 zinc finger occupies 432-492 (KECSFCEDPR…PFFAYCKQHA (61 aa)). Serine 523 is subject to Phosphoserine. Residues 623–671 (MIQIQENMAEQKNIKDKLENEQEKLHVEYNKLCESLEELQNLNGKLRSE) adopt a coiled-coil conformation. The PHD-type 3 zinc finger occupies 718–772 (LYSCGICKKNHDQHLLLLCDTCKLHYHLGCLDPPLTRMPRKTKNSYWQCSECDQA). Positions 721, 724, 736, 739, 744, 747, 766, and 769 each coordinate Zn(2+). Residues serine 774, serine 775, and serine 828 each carry the phosphoserine modification. The interval 804-855 (VPQDVPPEPKKIPIRNTRTRGRKRSFVPEEEKHEERVPRERRQRQSVLQKKP) is disordered. The segment covering 829–843 (FVPEEEKHEERVPRE) has biased composition (basic and acidic residues). The PHD-type 4 zinc finger occupies 861–914 (RTECSTCKGTGDNENLVRCDECRLCYHFGCLDPPLKKSPKQTGYGWICQECDSS). Residues cysteine 864, cysteine 867, cysteine 879, cysteine 882, histidine 887, cysteine 890, cysteine 908, and cysteine 911 each coordinate Zn(2+). Residues 912-941 (DSSSSKEDENEAEKKNASQELSMEQKTPKK) form a disordered region. The span at 915-928 (SSKEDENEAEKKNA) shows a compositional bias: basic and acidic residues. A compositionally biased stretch (polar residues) spans 930 to 941 (QELSMEQKTPKK).

As to expression, high levels detected in testis, lung and spleen and low levels in muscle, heart, intestine and kidney (at protein level). Widely expressed in adult with increased levels in intestine, colon and lung.

Its subcellular location is the nucleus. It is found in the chromosome. The protein resides in the cytoplasm. Its function is as follows. Histone-binding protein. Binds preferentially to unmodified histone H3 but can also bind to a lesser extent to histone H3 trimethylated at 'Lys-9' (H3K9me3) as well as to histone H3 monomethylated at 'Lys-27' (H3K27ac) and trimethylated at 'Lys-27' (H3K27me3). Represses PDGFRA expression, thus playing a role in regulation of mesenchymal cell proliferation. Suppresses the expression of CDKN1A/p21 by reducing the level of trimethylation of histone H3 'Lys-4', leading to enhanced proliferation of germinal center B cells. This chain is PHD finger protein 14 (Phf14), found in Mus musculus (Mouse).